The primary structure comprises 216 residues: Small ribosomal subunit protein uS3 (216 aa).

Residues 38 to 106 (IRGYLKKKLY…EIIINILEVR (69 aa)) enclose the KH type-2 domain.

It belongs to the universal ribosomal protein uS3 family. Part of the 30S ribosomal subunit. Forms a tight complex with proteins S10 and S14.

Binds the lower part of the 30S subunit head. Binds mRNA in the 70S ribosome, positioning it for translation. The chain is Small ribosomal subunit protein uS3 from Syntrophus aciditrophicus (strain SB).